The sequence spans 686 residues: Catalase-2 (686 aa).

Positions 1–27 are enriched in basic and acidic residues; that stretch reads MSDDQNKRVNEHSKDEQLEQYRTDNSG. The interval 1–43 is disordered; that stretch reads MSDDQNKRVNEHSKDEQLEQYRTDNSGKKMTTNQGLRVSEDEH. Residues His-78 and Asn-151 contribute to the active site. A heme-binding site is contributed by Tyr-365.

The protein belongs to the catalase family. HPII subfamily. Requires heme as cofactor.

The catalysed reaction is 2 H2O2 = O2 + 2 H2O. Its function is as follows. Decomposes hydrogen peroxide into water and oxygen; serves to protect cells from the toxic effects of hydrogen peroxide. Involved in sporulation. The polypeptide is Catalase-2 (katE) (Bacillus subtilis (strain 168)).